Here is a 284-residue protein sequence, read N- to C-terminus: 2-dehydro-3-deoxyphosphooctonate aldolase (284 aa).

The protein belongs to the KdsA family.

The protein localises to the cytoplasm. The catalysed reaction is D-arabinose 5-phosphate + phosphoenolpyruvate + H2O = 3-deoxy-alpha-D-manno-2-octulosonate-8-phosphate + phosphate. The protein operates within carbohydrate biosynthesis; 3-deoxy-D-manno-octulosonate biosynthesis; 3-deoxy-D-manno-octulosonate from D-ribulose 5-phosphate: step 2/3. Its pathway is bacterial outer membrane biogenesis; lipopolysaccharide biosynthesis. The protein is 2-dehydro-3-deoxyphosphooctonate aldolase of Pectobacterium carotovorum subsp. carotovorum (strain PC1).